Consider the following 144-residue polypeptide: Large ribosomal subunit protein uL15 (144 aa).

The interval 1-56 (MELNNLKPAEGAKHAKRRVGRGIGSGLGKTAGRGHKGQKSRSGGFHKVGFEGGQMP) is disordered. A compositionally biased stretch (gly residues) spans 21 to 31 (RGIGSGLGKTA).

It belongs to the universal ribosomal protein uL15 family. In terms of assembly, part of the 50S ribosomal subunit.

Binds to the 23S rRNA. This Burkholderia mallei (strain NCTC 10247) protein is Large ribosomal subunit protein uL15.